The primary structure comprises 350 residues: Protein O-mannose kinase (350 aa).

Methionine 1 is subject to N-acetylmethionine. The Cytoplasmic portion of the chain corresponds to 1–20 (MEKQPQNKRRGLAPREVPPA). Residues 21-43 (VGLLLIMALMNTLLYLCLDHFFI) traverse the membrane as a helical; Signal-anchor for type II membrane protein segment. Over 44–350 (APRQSIVDPR…AVMSQAREML (307 aa)) the chain is Lumenal. One can recognise a Protein kinase domain in the interval 81–350 (VRQLKRVGEG…AVMSQAREML (270 aa)). 3 N-linked (GlcNAc...) asparagine glycosylation sites follow: asparagine 165, asparagine 220, and asparagine 235.

This sequence belongs to the protein kinase superfamily. Ser/Thr protein kinase family. STKL subfamily.

Its subcellular location is the endoplasmic reticulum membrane. It carries out the reaction 3-O-[beta-D-GalNAc-(1-&gt;3)-beta-D-GlcNAc-(1-&gt;4)-alpha-D-Man]-L-Thr-[protein] + ATP = 3-O-[beta-D-GalNAc-(1-&gt;3)-beta-D-GlcNAc-(1-&gt;4)-(O-6-P-alpha-D-Man)]-Thr-[protein] + ADP + H(+). Functionally, protein O-mannose kinase that specifically mediates phosphorylation at the 6-position of an O-mannose of the trisaccharide (N-acetylgalactosamine (GalNAc)-beta-1,3-N-acetylglucosamine (GlcNAc)-beta-1,4-mannose) to generate phosphorylated O-mannosyl trisaccharide (N-acetylgalactosamine-beta-1,3-N-acetylglucosamine-beta-1,4-(phosphate-6-)mannose). Phosphorylated O-mannosyl trisaccharide is a carbohydrate structure present in alpha-dystroglycan (DAG1), which is required for binding laminin G-like domain-containing extracellular proteins with high affinity. Only shows kinase activity when the GalNAc-beta-3-GlcNAc-beta-terminus is linked to the 4-position of O-mannose, suggesting that this disaccharide serves as the substrate recognition motif. The chain is Protein O-mannose kinase (POMK) from Macaca fascicularis (Crab-eating macaque).